A 315-amino-acid polypeptide reads, in one-letter code: Calumenin (315 aa).

A signal peptide spans 1–19 (MDLRQFLMCLSLCTAFALS). Y47 is subject to Phosphotyrosine. T65 bears the Phosphothreonine mark. EF-hand domains follow at residues 68-103 (ESKE…AQKK), 104-139 (YIYD…TYLD), 151-186 (PIMV…EEYD), 188-223 (MKDI…HDGN), 229-264 (WVKT…SDYD), and 265-300 (HAEA…FVGS). S69 bears the Phosphoserine mark. D81, D83, D85, E92, D117, N119, D121, and E128 together coordinate Ca(2+). An N-linked (GlcNAc...) asparagine glycan is attached at N131. 13 residues coordinate Ca(2+): D164, D166, D168, E175, D201, N203, D205, E212, D242, N244, D246, K248, and E253. A Phosphothreonine modification is found at T254. Phosphoserine is present on residues S261 and S277. Ca(2+) contacts are provided by D278, D280, D282, K284, and E289. The Prevents secretion from ER signature appears at 312-315 (HDEF).

It belongs to the CREC family. As to quaternary structure, binds crotoxin. Interacts with GGCX.

The protein resides in the endoplasmic reticulum membrane. It localises to the golgi apparatus. The protein localises to the secreted. It is found in the melanosome. Its subcellular location is the sarcoplasmic reticulum lumen. In terms of biological role, involved in regulation of vitamin K-dependent carboxylation of multiple N-terminal glutamate residues. Seems to inhibit gamma-carboxylase GGCX. Binds 7 calcium ions with a low affinity. The polypeptide is Calumenin (Calu) (Rattus norvegicus (Rat)).